A 436-amino-acid chain; its full sequence is Trigger factor (436 aa).

Residues 162–247 enclose the PPIase FKBP-type domain; that stretch reads GDRVIIDFEG…LNNVSEPTLP (86 aa).

It belongs to the FKBP-type PPIase family. Tig subfamily.

It is found in the cytoplasm. The catalysed reaction is [protein]-peptidylproline (omega=180) = [protein]-peptidylproline (omega=0). Functionally, involved in protein export. Acts as a chaperone by maintaining the newly synthesized protein in an open conformation. Functions as a peptidyl-prolyl cis-trans isomerase. This is Trigger factor from Neisseria gonorrhoeae (strain ATCC 700825 / FA 1090).